Consider the following 402-residue polypeptide: Deoxyguanosinetriphosphate triphosphohydrolase-like protein (402 aa).

The HD domain occupies 73 to 217 (RLTHTIEVAQ…AAIADDIAYN (145 aa)).

Belongs to the dGTPase family. Type 2 subfamily.

The polypeptide is Deoxyguanosinetriphosphate triphosphohydrolase-like protein (Brucella suis (strain ATCC 23445 / NCTC 10510)).